We begin with the raw amino-acid sequence, 252 residues long: L-aspartate dehydrogenase (252 aa).

NAD(+) is bound by residues Ala119 and Asn175. Residue His203 is part of the active site.

Belongs to the L-aspartate dehydrogenase family.

It catalyses the reaction L-aspartate + NADP(+) + H2O = oxaloacetate + NH4(+) + NADPH + H(+). The enzyme catalyses L-aspartate + NAD(+) + H2O = oxaloacetate + NH4(+) + NADH + H(+). Its pathway is cofactor biosynthesis; NAD(+) biosynthesis; iminoaspartate from L-aspartate (dehydrogenase route): step 1/1. Its function is as follows. Specifically catalyzes the NAD or NADP-dependent dehydrogenation of L-aspartate to iminoaspartate. The chain is L-aspartate dehydrogenase from Methanospirillum hungatei JF-1 (strain ATCC 27890 / DSM 864 / NBRC 100397 / JF-1).